The sequence spans 273 residues: Terpene cyclase ascF (273 aa).

7 helical membrane passes run Val-18–Ala-38, Met-49–Val-69, Met-78–Leu-98, Ile-113–Ile-133, Tyr-153–Val-173, Gly-178–Met-198, and Ala-217–Leu-237.

It belongs to the paxB family.

Its subcellular location is the membrane. It carries out the reaction ilicicolin A epoxide = ilicicolin C. Its pathway is secondary metabolite biosynthesis; terpenoid biosynthesis. In terms of biological role, terpene cyclase; part of the asc-1 gene cluster that mediates the biosynthesis of both ascochlorin and ascofuranone, a strong inhibitor of cyanide-insensitive alternative oxidases and a promising drug candidate against African trypanosomiasis. The first step in the pathway is performed by the non-reducing polyketide synthase ascC that produces orsellinic acid by condensing acetyl-CoA with 3 malonyl-CoA units. Orsellinic acid is then prenylated by the prenyltransferase ascA to yield ilicicolinic acid B. Ilicicolinic acid B is further reduced to ilicicolin B by the reductase ascB. The halogenase ascD then chlorinates ilicicolin B to produce ilicicolin A which is converted to ilicicolin A epoxide by the cytochrome P450 monooxygenase ascE that catalyzes stereoselective epoxidation of the terminal double bond of the prenyl group. Ilicicolin A epoxide is the last common precursor for the biosynthesis of ascofuranone and ascochlorin. The terpene cyclase ascF produces a monocyclic terpene, and the cyclization reaction is proposed to be initiated by protonation of the terminal epoxide of ilicicolin A epoxide to generate a monocyclic tertiarycation, which is followed by a series of hydride and methyl shifts with abstraction of proton, leading to the formation of the (14S,15R,19R)-trimethylcyclohexanone ring structure of ilicicolin C, which is finally reduced to ascochlorin by the dehydrogenase ascG. On the other hand, ilicicolin A epoxide is hydroxylated by the cytochrome P450 monooxygenase ascH, and the resultant product is cyclized by the terpene cyclase ascI to ascofuranol via protonation-initiated epoxide ring opening, which facilitates the 6-endo-tet cyclization to form the tetrahy-drofuran ring. Finally, ascofuranol is oxidized into ascofuranone by ascJ. This chain is Terpene cyclase ascF, found in Acremonium egyptiacum (Oospora egyptiaca).